The primary structure comprises 252 residues: 3-dehydroquinate dehydratase (252 aa).

Residues Ser-21, 46-48 (EWR), and Arg-82 each bind 3-dehydroquinate. Residue His-143 is the Proton donor/acceptor of the active site. The Schiff-base intermediate with substrate role is filled by Lys-170. Arg-213, Ser-232, and Gln-236 together coordinate 3-dehydroquinate.

Belongs to the type-I 3-dehydroquinase family. Homodimer.

The catalysed reaction is 3-dehydroquinate = 3-dehydroshikimate + H2O. It participates in metabolic intermediate biosynthesis; chorismate biosynthesis; chorismate from D-erythrose 4-phosphate and phosphoenolpyruvate: step 3/7. Its function is as follows. Involved in the third step of the chorismate pathway, which leads to the biosynthesis of aromatic amino acids. Catalyzes the cis-dehydration of 3-dehydroquinate (DHQ) and introduces the first double bond of the aromatic ring to yield 3-dehydroshikimate. The chain is 3-dehydroquinate dehydratase from Shigella dysenteriae.